The following is a 901-amino-acid chain: HTH-type transcriptional regulator MalT (901 aa).

Position 39-46 (39-46) interacts with ATP; that stretch reads SPAGYGKT. The 66-residue stretch at 829–894 folds into the HTH luxR-type domain; it reads ELIRTSPLTQ…DAVQHAQQLL (66 aa). The segment at residues 853 to 872 is a DNA-binding region (H-T-H motif); the sequence is NEQIAGELAVAATTIKTHIR.

This sequence belongs to the MalT family. Monomer in solution. Oligomerizes to an active state in the presence of the positive effectors ATP and maltotriose.

Its activity is regulated as follows. Activated by ATP and maltotriose, which are both required for DNA binding. Positively regulates the transcription of the maltose regulon whose gene products are responsible for uptake and catabolism of malto-oligosaccharides. Specifically binds to the promoter region of its target genes, recognizing a short DNA motif called the MalT box. This Salmonella choleraesuis (strain SC-B67) protein is HTH-type transcriptional regulator MalT.